The primary structure comprises 544 residues: Calcium-dependent protein kinase 6 (544 aa).

Positions 1 to 47 (MGNSCRGSFKDKIYEGNHSRPEENSKSTTTTVSSVHSPTTDQDFSKQ) are disordered. The N-myristoyl glycine moiety is linked to residue G2. The span at 8–25 (SFKDKIYEGNHSRPEENS) shows a compositional bias: basic and acidic residues. Residues 26 to 40 (KSTTTTVSSVHSPTT) are compositionally biased toward low complexity. Residues 85–343 (YTLSRKLGQG…AHEVLRHPWI (259 aa)) form the Protein kinase domain. ATP contacts are provided by residues 91-99 (LGQGQFGTT) and K114. D209 functions as the Proton acceptor in the catalytic mechanism. S249 carries the phosphoserine modification. The interval 349–379 (APDRALDPAVLSRLKQFSAMNKLKKMALKVI) is autoinhibitory domain. EF-hand domains follow at residues 386 to 421 (EEIA…YGST), 422 to 457 (LKDT…LNKL), 458 to 493 (EREE…HGMT), and 497 to 527 (LEDI…GNAG). The Ca(2+) site is built by D399, D401, S403, E410, D435, D437, S439, T441, E446, D471, D473, S475, Y477, E482, D505, D507, D509, R511, and E516.

Belongs to the protein kinase superfamily. Ser/Thr protein kinase family. CDPK subfamily. Interacts with SLAC1. Interacts with FD. In terms of tissue distribution, expressed in both guard cells and mesophyll cells. Expressed in the shoot apical meristem.

It localises to the cell membrane. Its subcellular location is the nucleus. The catalysed reaction is L-seryl-[protein] + ATP = O-phospho-L-seryl-[protein] + ADP + H(+). It catalyses the reaction L-threonyl-[protein] + ATP = O-phospho-L-threonyl-[protein] + ADP + H(+). Its activity is regulated as follows. Activated by calcium. Autophosphorylation may play an important role in the regulation of the kinase activity. Functionally, may play a role in signal transduction pathways that involve calcium as a second messenger. Functions in abscisic acid (ABA) regulation of guard cell S-type anion- and Ca(2+)-permeable channels and stomatal closure. Phosphorylates FD. The chain is Calcium-dependent protein kinase 6 (CPK6) from Arabidopsis thaliana (Mouse-ear cress).